A 425-amino-acid chain; its full sequence is Adenosine 3'-phospho 5'-phosphosulfate transporter 1 (425 aa).

9 consecutive transmembrane segments (helical) span residues 27 to 47 (FLILLGYSTVATPAAILIYYV), 102 to 122 (VIILLLFFFSGIQVTLVAMGV), 147 to 167 (TQFLIFCNRIVALVLSLMILA), 232 to 252 (YSWFEYGCGCTIAFGASLFLL), 263 to 283 (ITYTSFSGMILMAGYLLFDAF), 303 to 323 (MMFGVNFFSAILCAVSLIEQG), 342 to 360 (VFLLSLSGAIGQIFIYSTI), 365 to 387 (PIVFAVIMTIRQMLSIVLSTIMY), and 391 to 411 (LTFLAAIGFMIVFAAIFVDIH).

It belongs to the nucleotide-sugar transporter family. SLC35B subfamily.

It localises to the golgi apparatus membrane. Functionally, mediates the transport of adenosine 3'-phospho 5'-phosphosulfate (PAPS), from cytosol into Golgi. PAPS is a universal sulfuryl donor for sulfation events that take place in the Golgi. This is Adenosine 3'-phospho 5'-phosphosulfate transporter 1 (pst-1) from Caenorhabditis elegans.